A 462-amino-acid chain; its full sequence is Zinc finger CCCH domain-containing protein 8 (462 aa).

6 C3H1-type zinc fingers span residues 105–133, 156–184, 209–237, 288–316, 367–395, and 422–450; these read RPGE…HPQW, QEGE…HPKE, RPSE…HPKD, RPGE…HPDR, RPGA…HPID, and REDA…HPPP.

This is Zinc finger CCCH domain-containing protein 8 from Oryza sativa subsp. japonica (Rice).